A 260-amino-acid chain; its full sequence is uncharacterized protein (260 aa).

An N-terminal signal peptide occupies residues 1 to 22 (MGYLKGFALYISILILIVFIAG). Residue cysteine 23 is the site of N-palmitoyl cysteine attachment. A lipid anchor (S-diacylglycerol cysteine) is attached at cysteine 23.

The protein belongs to the staphylococcal tandem lipoprotein family.

The protein resides in the cell membrane. This is an uncharacterized protein from Staphylococcus aureus (strain MSSA476).